The following is a 303-amino-acid chain: Digeranylgeranylglyceryl phosphate synthase (303 aa).

Helical transmembrane passes span 23 to 43, 88 to 108, 130 to 150, 164 to 184, 206 to 228, 232 to 254, and 272 to 292; these read VLGV…AAIA, LALA…PLTG, LPGN…GSLA, TIPI…VKGV, FALR…AAPL, GYAF…AACL, and VAMF…PVFY.

This sequence belongs to the UbiA prenyltransferase family. DGGGP synthase subfamily. Mg(2+) serves as cofactor.

Its subcellular location is the cell membrane. The catalysed reaction is sn-3-O-(geranylgeranyl)glycerol 1-phosphate + (2E,6E,10E)-geranylgeranyl diphosphate = 2,3-bis-O-(geranylgeranyl)-sn-glycerol 1-phosphate + diphosphate. Its pathway is membrane lipid metabolism; glycerophospholipid metabolism. Prenyltransferase that catalyzes the transfer of the geranylgeranyl moiety of geranylgeranyl diphosphate (GGPP) to the C2 hydroxyl of (S)-3-O-geranylgeranylglyceryl phosphate (GGGP). This reaction is the second ether-bond-formation step in the biosynthesis of archaeal membrane lipids. In Ignicoccus hospitalis (strain KIN4/I / DSM 18386 / JCM 14125), this protein is Digeranylgeranylglyceryl phosphate synthase.